Reading from the N-terminus, the 389-residue chain is Xylose isomerase (389 aa).

Residues histidine 54 and aspartate 57 contribute to the active site. Residues glutamate 181, glutamate 217, histidine 220, aspartate 245, aspartate 255, aspartate 257, and aspartate 287 each contribute to the Mg(2+) site.

Belongs to the xylose isomerase family. In terms of assembly, homotetramer. It depends on Mg(2+) as a cofactor.

Its subcellular location is the cytoplasm. The enzyme catalyses alpha-D-xylose = alpha-D-xylulofuranose. In terms of biological role, involved in D-xylose catabolism. The protein is Xylose isomerase (xylA) of Streptomyces violaceusniger.